A 171-amino-acid chain; its full sequence is Protein-export protein SecB (171 aa).

Belongs to the SecB family. In terms of assembly, homotetramer, a dimer of dimers. One homotetramer interacts with 1 SecA dimer.

The protein resides in the cytoplasm. One of the proteins required for the normal export of preproteins out of the cell cytoplasm. It is a molecular chaperone that binds to a subset of precursor proteins, maintaining them in a translocation-competent state. It also specifically binds to its receptor SecA. This is Protein-export protein SecB from Histophilus somni (strain 2336) (Haemophilus somnus).